A 427-amino-acid polypeptide reads, in one-letter code: Trigger factor (427 aa).

A PPIase FKBP-type domain is found at 163–248; it reads GNIAIIDFKG…VKGIKVKELP (86 aa).

This sequence belongs to the FKBP-type PPIase family. Tig subfamily.

It localises to the cytoplasm. The enzyme catalyses [protein]-peptidylproline (omega=180) = [protein]-peptidylproline (omega=0). Involved in protein export. Acts as a chaperone by maintaining the newly synthesized protein in an open conformation. Functions as a peptidyl-prolyl cis-trans isomerase. The sequence is that of Trigger factor from Clostridium botulinum (strain Alaska E43 / Type E3).